The sequence spans 360 residues: Phospho-N-acetylmuramoyl-pentapeptide-transferase (360 aa).

Residues 1 to 25 lie on the Periplasmic side of the membrane; it reads MLVWLAEHLVKYYSGFNVFSYLTFR. A helical membrane pass occupies residues 26–46; the sequence is AIVSLLTALFISLWMGPRMIA. The Cytoplasmic segment spans residues 47-71; sequence HLQKLSFGQVVRNDGPESHFSKRGT. A helical transmembrane segment spans residues 72–92; it reads PTMGGIMILTAIVISVLLWAY. Residue P93 is a topological domain, periplasmic. Residues 94–114 traverse the membrane as a helical segment; it reads SNPYVWCVLVVLVGYGIIGFV. At 115–131 the chain is on the cytoplasmic side; the sequence is DDYRKVVRKDTKGLIAR. A helical transmembrane segment spans residues 132–152; the sequence is WKYFWMSVIALGVAFALYLAG. Residues 153–167 are Periplasmic-facing; the sequence is KDTPATQLVVPFFKD. Residues 168–188 form a helical membrane-spanning segment; it reads VMPQLGLFYILLAYFVIVGTG. At 189-198 the chain is on the cytoplasmic side; that stretch reads NAVNLTDGLD. A helical membrane pass occupies residues 199–219; sequence GLAIMPTVFVAGGFALVAWAT. Residues 220-235 are Periplasmic-facing; the sequence is GNMNFASYLHIPYLRH. Residues 236–256 form a helical membrane-spanning segment; that stretch reads AGELVIVCTAIVGAGLGFLWF. The Cytoplasmic portion of the chain corresponds to 257-262; it reads NTYPAQ. The helical transmembrane segment at 263–283 threads the bilayer; that stretch reads VFMGDVGSLALGGALGIIAVL. Residues 284–287 are Periplasmic-facing; it reads LRQE. The helical transmembrane segment at 288–308 threads the bilayer; sequence FLLVIMGGVFVVETLSVILQV. Residues 309 to 337 are Cytoplasmic-facing; that stretch reads GSFKLRGQRIFRMAPIHHHYELKGWPEPR. The chain crosses the membrane as a helical span at residues 338-358; it reads VIVRFWIISLMLVLIGLATLK. The Periplasmic segment spans residues 359–360; that stretch reads VR.

This sequence belongs to the glycosyltransferase 4 family. MraY subfamily. Requires Mg(2+) as cofactor.

The protein localises to the cell inner membrane. The catalysed reaction is UDP-N-acetyl-alpha-D-muramoyl-L-alanyl-gamma-D-glutamyl-meso-2,6-diaminopimeloyl-D-alanyl-D-alanine + di-trans,octa-cis-undecaprenyl phosphate = di-trans,octa-cis-undecaprenyl diphospho-N-acetyl-alpha-D-muramoyl-L-alanyl-D-glutamyl-meso-2,6-diaminopimeloyl-D-alanyl-D-alanine + UMP. It functions in the pathway cell wall biogenesis; peptidoglycan biosynthesis. In terms of biological role, catalyzes the initial step of the lipid cycle reactions in the biosynthesis of the cell wall peptidoglycan: transfers peptidoglycan precursor phospho-MurNAc-pentapeptide from UDP-MurNAc-pentapeptide onto the lipid carrier undecaprenyl phosphate, yielding undecaprenyl-pyrophosphoryl-MurNAc-pentapeptide, known as lipid I. The chain is Phospho-N-acetylmuramoyl-pentapeptide-transferase from Escherichia coli O7:K1 (strain IAI39 / ExPEC).